A 342-amino-acid chain; its full sequence is MLKEPPKNSREKTKNLLLTLQDKICSGLENIDGKGKFTEESWLRDEGGGGRSRVLKNGSIFEQAGVNFSEVQGKELPQSIISQRPEAKGHEWFATGTSMVLHPKNPFIPTVHLNYRYFEAGPVWWFGGGADLTPFYPYLSDVRNFHKEHKKACEKVDKDLHKVFKPWCDEYFFLKHRNESRGIGGIFYDYQDGSGNIYRGNNQNGEASKVSENIGKSNLNWDNLFSLAENCGQAFLPSYLPIIEKRANKTYTSKEREFQLYRRGRYVEFNLVWDRGTIFGLQTNGRTESILMSLPPLARWEYGYKAKKGSREEFLTSIFTKPQDWLNDKDLENFCMENNIFD.

S98 serves as a coordination point for substrate. A divalent metal cation-binding residues include H102 and H112. H112 serves as the catalytic Proton donor. A substrate-binding site is contributed by 114-116 (NYR). Positions 146 and 176 each coordinate a divalent metal cation. The segment at 266-301 (YVEFNLVWDRGTIFGLQTNGRTESILMSLPPLARWE) is important for dimerization.

This sequence belongs to the aerobic coproporphyrinogen-III oxidase family. In terms of assembly, homodimer. It depends on a divalent metal cation as a cofactor.

It localises to the cytoplasm. The enzyme catalyses coproporphyrinogen III + O2 + 2 H(+) = protoporphyrinogen IX + 2 CO2 + 2 H2O. Its pathway is porphyrin-containing compound metabolism; protoporphyrin-IX biosynthesis; protoporphyrinogen-IX from coproporphyrinogen-III (O2 route): step 1/1. Functionally, involved in the heme and chlorophyll biosynthesis. Catalyzes the aerobic oxidative decarboxylation of propionate groups of rings A and B of coproporphyrinogen-III to yield the vinyl groups in protoporphyrinogen-IX. This chain is Oxygen-dependent coproporphyrinogen-III oxidase, found in Prochlorococcus marinus (strain MIT 9312).